The sequence spans 126 residues: Aspartate 1-decarboxylase (126 aa).

Residue Ser25 is the Schiff-base intermediate with substrate; via pyruvic acid of the active site. A Pyruvic acid (Ser) modification is found at Ser25. Substrate is bound at residue Thr57. The active-site Proton donor is Tyr58. Residue 73–75 participates in substrate binding; the sequence is GGA.

Belongs to the PanD family. Heterooctamer of four alpha and four beta subunits. It depends on pyruvate as a cofactor. In terms of processing, is synthesized initially as an inactive proenzyme, which is activated by self-cleavage at a specific serine bond to produce a beta-subunit with a hydroxyl group at its C-terminus and an alpha-subunit with a pyruvoyl group at its N-terminus.

It is found in the cytoplasm. The catalysed reaction is L-aspartate + H(+) = beta-alanine + CO2. Its pathway is cofactor biosynthesis; (R)-pantothenate biosynthesis; beta-alanine from L-aspartate: step 1/1. Functionally, catalyzes the pyruvoyl-dependent decarboxylation of aspartate to produce beta-alanine. The sequence is that of Aspartate 1-decarboxylase from Stenotrophomonas maltophilia (strain K279a).